The primary structure comprises 334 residues: UDP-N-acetylglucosamine--N-acetylmuramyl-(pentapeptide) pyrophosphoryl-undecaprenol N-acetylglucosamine transferase (334 aa).

Residues 11–13 (TGG), N125, S185, I229, and Q274 contribute to the UDP-N-acetyl-alpha-D-glucosamine site.

The protein belongs to the glycosyltransferase 28 family. MurG subfamily.

It localises to the cell inner membrane. The catalysed reaction is di-trans,octa-cis-undecaprenyl diphospho-N-acetyl-alpha-D-muramoyl-L-alanyl-D-glutamyl-meso-2,6-diaminopimeloyl-D-alanyl-D-alanine + UDP-N-acetyl-alpha-D-glucosamine = di-trans,octa-cis-undecaprenyl diphospho-[N-acetyl-alpha-D-glucosaminyl-(1-&gt;4)]-N-acetyl-alpha-D-muramoyl-L-alanyl-D-glutamyl-meso-2,6-diaminopimeloyl-D-alanyl-D-alanine + UDP + H(+). The protein operates within cell wall biogenesis; peptidoglycan biosynthesis. Functionally, cell wall formation. Catalyzes the transfer of a GlcNAc subunit on undecaprenyl-pyrophosphoryl-MurNAc-pentapeptide (lipid intermediate I) to form undecaprenyl-pyrophosphoryl-MurNAc-(pentapeptide)GlcNAc (lipid intermediate II). The sequence is that of UDP-N-acetylglucosamine--N-acetylmuramyl-(pentapeptide) pyrophosphoryl-undecaprenol N-acetylglucosamine transferase from Thermosipho melanesiensis (strain DSM 12029 / CIP 104789 / BI429).